We begin with the raw amino-acid sequence, 342 residues long: Holliday junction branch migration complex subunit RuvB (342 aa).

The segment at 1-181 (MENRMVTPFD…FGMLCAMEFY (181 aa)) is large ATPase domain (RuvB-L). ATP is bound by residues Leu-20, Arg-21, Gly-62, Lys-65, Thr-66, Thr-67, 128–130 (EDY), Arg-171, Tyr-181, and Arg-218. Position 66 (Thr-66) interacts with Mg(2+). A small ATPAse domain (RuvB-S) region spans residues 182 to 252 (TDEELMEIVV…GAKAALDLLE (71 aa)). The head domain (RuvB-H) stretch occupies residues 255–342 (KEGLDKIDNK…KDNQVSIFNK (88 aa)). DNA-binding residues include Arg-310 and Arg-315.

This sequence belongs to the RuvB family. In terms of assembly, homohexamer. Forms an RuvA(8)-RuvB(12)-Holliday junction (HJ) complex. HJ DNA is sandwiched between 2 RuvA tetramers; dsDNA enters through RuvA and exits via RuvB. An RuvB hexamer assembles on each DNA strand where it exits the tetramer. Each RuvB hexamer is contacted by two RuvA subunits (via domain III) on 2 adjacent RuvB subunits; this complex drives branch migration. In the full resolvosome a probable DNA-RuvA(4)-RuvB(12)-RuvC(2) complex forms which resolves the HJ.

The protein localises to the cytoplasm. The enzyme catalyses ATP + H2O = ADP + phosphate + H(+). In terms of biological role, the RuvA-RuvB-RuvC complex processes Holliday junction (HJ) DNA during genetic recombination and DNA repair, while the RuvA-RuvB complex plays an important role in the rescue of blocked DNA replication forks via replication fork reversal (RFR). RuvA specifically binds to HJ cruciform DNA, conferring on it an open structure. The RuvB hexamer acts as an ATP-dependent pump, pulling dsDNA into and through the RuvAB complex. RuvB forms 2 homohexamers on either side of HJ DNA bound by 1 or 2 RuvA tetramers; 4 subunits per hexamer contact DNA at a time. Coordinated motions by a converter formed by DNA-disengaged RuvB subunits stimulates ATP hydrolysis and nucleotide exchange. Immobilization of the converter enables RuvB to convert the ATP-contained energy into a lever motion, pulling 2 nucleotides of DNA out of the RuvA tetramer per ATP hydrolyzed, thus driving DNA branch migration. The RuvB motors rotate together with the DNA substrate, which together with the progressing nucleotide cycle form the mechanistic basis for DNA recombination by continuous HJ branch migration. Branch migration allows RuvC to scan DNA until it finds its consensus sequence, where it cleaves and resolves cruciform DNA. This is Holliday junction branch migration complex subunit RuvB from Clostridium botulinum (strain 657 / Type Ba4).